A 594-amino-acid chain; its full sequence is MIQNVGNHLRRGFASMFSNRTSRKSISHPESGDPPTMAEGEGYRNPTEVQMSQLVLPCHTNHRGELSIGQLLKWIDTTACLSAERHAGCPCVTASMDDIYFDHTISVGQVVNIKAKVNRAFNSSMEVGIQVVSEDLCSEKQWSVCKALATFVAHRELSKVKLKQVIPLTEEEKTEHGVAAERRRMRLVYADTIKDLLTHCVIQDDLDKDCSNMVPAEKTRVESVELVLPPHANHQGNTFGGQIMAWMENVATIAASRLCHAHPTLKAIEMFHFRGPSQVGDRLVLKAIVNNAFKHSMEVGVCVEAYRQEAETQRRHINSAFMTFVVLDKDDQPQKLPWIRPQPGEGERRYREASARKKIRLDRKYLVSCKQAEVALSVPWDPSNQVYLSYYNVSSLKTLMAKDNWVLSVEISEVRLYILEEDFLSFHLEMVVNVDAAQVFQLLSDLRRRPEWDKHYRSVELVQQVDEDDAIYHVISPALSGNTKPQDFVILASRRKPCDNGDPYVIALRSVTLPTHHETPEYQRGETLCSGFCLWREGDQMTKVSYYNQATPGFLNYVTTNVSGLSSEFYNTFKACESFLLDNRNDLAPSLQTL.

The N-terminal 20 residues, 1-20, are a transit peptide targeting the mitochondrion; it reads MIQNVGNHLRRGFASMFSNR. Phosphoserine is present on residues Ser-15 and Ser-25. The interval 20-43 is disordered; it reads RTSRKSISHPESGDPPTMAEGEGY. Residues 45 to 157 form the HotDog ACOT-type 1 domain; it reads NPTEVQMSQL…LATFVAHREL (113 aa). CoA is bound by residues 93-95, 122-124, Arg-183, and 272-274; these read TAS, NSS, and HFR. Positions 217–330 constitute a HotDog ACOT-type 2 domain; it reads EKTRVESVEL…FMTFVVLDKD (114 aa). The 213-residue stretch at 370 to 582 folds into the START domain; it reads KQAEVALSVP…FKACESFLLD (213 aa).

The protein localises to the mitochondrion matrix. It localises to the cytoplasm. The catalysed reaction is hexadecanoyl-CoA + H2O = hexadecanoate + CoA + H(+). It catalyses the reaction tetradecanoyl-CoA + H2O = tetradecanoate + CoA + H(+). The enzyme catalyses dodecanoyl-CoA + H2O = dodecanoate + CoA + H(+). It carries out the reaction butanoyl-CoA + H2O = butanoate + CoA + H(+). It functions in the pathway lipid metabolism; fatty acid metabolism. Has an acyl-CoA thioesterase activity with a preference for the long chain fatty acyl-CoA thioesters hexadecanoyl-CoA/palmitoyl-CoA and tetradecanoyl-CoA/myristoyl-CoA which are the main substrates in the mitochondrial beta-oxidation pathway. This is Acyl-coenzyme A thioesterase 11 (Acot11) from Mus musculus (Mouse).